Here is a 433-residue protein sequence, read N- to C-terminus: Enolase (433 aa).

Residue Gln167 coordinates (2R)-2-phosphoglycerate. Glu209 serves as the catalytic Proton donor. Mg(2+) contacts are provided by Asp246, Glu291, and Asp318. The (2R)-2-phosphoglycerate site is built by Lys343, Arg372, Ser373, and Lys394. Lys343 (proton acceptor) is an active-site residue.

This sequence belongs to the enolase family. In terms of assembly, component of the RNA degradosome, a multiprotein complex involved in RNA processing and mRNA degradation. Mg(2+) is required as a cofactor.

It is found in the cytoplasm. The protein localises to the secreted. The protein resides in the cell surface. The enzyme catalyses (2R)-2-phosphoglycerate = phosphoenolpyruvate + H2O. The protein operates within carbohydrate degradation; glycolysis; pyruvate from D-glyceraldehyde 3-phosphate: step 4/5. In terms of biological role, catalyzes the reversible conversion of 2-phosphoglycerate (2-PG) into phosphoenolpyruvate (PEP). It is essential for the degradation of carbohydrates via glycolysis. The sequence is that of Enolase from Histophilus somni (strain 129Pt) (Haemophilus somnus).